Reading from the N-terminus, the 292-residue chain is Ribosomal protein L11 methyltransferase (292 aa).

Thr145, Gly166, Asp188, and Asn229 together coordinate S-adenosyl-L-methionine.

This sequence belongs to the methyltransferase superfamily. PrmA family.

The protein localises to the cytoplasm. The catalysed reaction is L-lysyl-[protein] + 3 S-adenosyl-L-methionine = N(6),N(6),N(6)-trimethyl-L-lysyl-[protein] + 3 S-adenosyl-L-homocysteine + 3 H(+). In terms of biological role, methylates ribosomal protein L11. In Alteromonas mediterranea (strain DSM 17117 / CIP 110805 / LMG 28347 / Deep ecotype), this protein is Ribosomal protein L11 methyltransferase.